We begin with the raw amino-acid sequence, 445 residues long: Probable glycine dehydrogenase (decarboxylating) subunit 1 (445 aa).

The protein belongs to the GcvP family. N-terminal subunit subfamily. The glycine cleavage system is composed of four proteins: P, T, L and H. In this organism, the P 'protein' is a heterodimer of two subunits.

The enzyme catalyses N(6)-[(R)-lipoyl]-L-lysyl-[glycine-cleavage complex H protein] + glycine + H(+) = N(6)-[(R)-S(8)-aminomethyldihydrolipoyl]-L-lysyl-[glycine-cleavage complex H protein] + CO2. The glycine cleavage system catalyzes the degradation of glycine. The P protein binds the alpha-amino group of glycine through its pyridoxal phosphate cofactor; CO(2) is released and the remaining methylamine moiety is then transferred to the lipoamide cofactor of the H protein. The chain is Probable glycine dehydrogenase (decarboxylating) subunit 1 from Chlorobium chlorochromatii (strain CaD3).